A 175-amino-acid polypeptide reads, in one-letter code: MVSLKDSHFDLFHLPAQFALDEAALDAAYRAVQTQVHPDRFAAAGDAQKRIAMQWATRANEAYRTLRDPLKRATYLLSLRGVDIGAENNTAMEPAFLMQQMEWRESIEDAAAARNVDALDALLAELRDEKRARLERLGTLLDSGADQAAAEAVRQLMFIERVASEVGAQIERLET.

Residues 7–79 (SHFDLFHLPA…LKRATYLLSL (73 aa)) form the J domain.

Belongs to the HscB family. In terms of assembly, interacts with HscA and stimulates its ATPase activity.

In terms of biological role, co-chaperone involved in the maturation of iron-sulfur cluster-containing proteins. Seems to help targeting proteins to be folded toward HscA. The protein is Co-chaperone protein HscB homolog of Burkholderia multivorans (strain ATCC 17616 / 249).